The primary structure comprises 427 residues: Serine--tRNA ligase (427 aa).

Threonine 231–glutamate 233 contributes to the L-serine binding site. Arginine 262–glutamate 264 contacts ATP. Position 285 (glutamate 285) interacts with L-serine. ATP is bound at residue glutamate 349 to serine 352. Serine 385 lines the L-serine pocket.

Belongs to the class-II aminoacyl-tRNA synthetase family. Type-1 seryl-tRNA synthetase subfamily. As to quaternary structure, homodimer. The tRNA molecule binds across the dimer.

The protein resides in the cytoplasm. The enzyme catalyses tRNA(Ser) + L-serine + ATP = L-seryl-tRNA(Ser) + AMP + diphosphate + H(+). It carries out the reaction tRNA(Sec) + L-serine + ATP = L-seryl-tRNA(Sec) + AMP + diphosphate + H(+). It functions in the pathway aminoacyl-tRNA biosynthesis; selenocysteinyl-tRNA(Sec) biosynthesis; L-seryl-tRNA(Sec) from L-serine and tRNA(Sec): step 1/1. Its function is as follows. Catalyzes the attachment of serine to tRNA(Ser). Is also able to aminoacylate tRNA(Sec) with serine, to form the misacylated tRNA L-seryl-tRNA(Sec), which will be further converted into selenocysteinyl-tRNA(Sec). The polypeptide is Serine--tRNA ligase (Listeria monocytogenes serotype 4b (strain CLIP80459)).